The chain runs to 212 residues: Interleukin-6 (212 aa).

An N-terminal signal peptide occupies residues 1 to 29; the sequence is MNSLSTSAFSPVAFSLGLLLVMATAFPTP. Cys72 and Cys78 are disulfide-bonded. Residue Ser81 is modified to Phosphoserine. A disulfide bond links Cys101 and Cys111. Residues 156 to 175 are disordered; sequence QKGKNPDKATTPNPTTNAGL. Over residues 163-175 the composition is skewed to polar residues; that stretch reads KATTPNPTTNAGL.

The protein belongs to the IL-6 superfamily. As to quaternary structure, component of a hexamer of two molecules each of IL6, IL6R and IL6ST; first binds to IL6R to associate with the signaling subunit IL6ST. Interacts with IL6R (via the N-terminal ectodomain); this interaction may be affected by IL6R-binding with SORL1, hence decreasing IL6 cis signaling. Interacts with SORL1 (via the N-terminal ectodomain); this interaction leads to IL6 internalization and lysosomal degradation. May form a trimeric complex with the soluble SORL1 ectodomain and soluble IL6R receptor; this interaction might stabilize circulating IL6, hence promoting IL6 trans signaling.

The protein localises to the secreted. Functionally, cytokine with a wide variety of biological functions in immunity, tissue regeneration, and metabolism. Binds to IL6R, then the complex associates to the signaling subunit IL6ST/gp130 to trigger the intracellular IL6-signaling pathway. The interaction with the membrane-bound IL6R and IL6ST stimulates 'classic signaling', whereas the binding of IL6 and soluble IL6R to IL6ST stimulates 'trans-signaling'. Alternatively, 'cluster signaling' occurs when membrane-bound IL6:IL6R complexes on transmitter cells activate IL6ST receptors on neighboring receiver cells. IL6 is a potent inducer of the acute phase response. Rapid production of IL6 contributes to host defense during infection and tissue injury, but excessive IL6 synthesis is involved in disease pathology. In the innate immune response, is synthesized by myeloid cells, such as macrophages and dendritic cells, upon recognition of pathogens through toll-like receptors (TLRs) at the site of infection or tissue injury. In the adaptive immune response, is required for the differentiation of B cells into immunoglobulin-secreting cells. Plays a major role in the differentiation of CD4(+) T cell subsets. Essential factor for the development of T follicular helper (Tfh) cells that are required for the induction of germinal-center formation. Required to drive naive CD4(+) T cells to the Th17 lineage. Also required for proliferation of myeloma cells and the survival of plasmablast cells. Its function is as follows. Acts as an essential factor in bone homeostasis and on vessels directly or indirectly by induction of VEGF, resulting in increased angiogenesis activity and vascular permeability. Induces, through 'trans-signaling' and synergistically with IL1B and TNF, the production of VEGF. Involved in metabolic controls, is discharged into the bloodstream after muscle contraction increasing lipolysis and improving insulin resistance. 'Trans-signaling' in central nervous system also regulates energy and glucose homeostasis. Mediates, through GLP-1, crosstalk between insulin-sensitive tissues, intestinal L cells and pancreatic islets to adapt to changes in insulin demand. Also acts as a myokine. Plays a protective role during liver injury, being required for maintenance of tissue regeneration. Also has a pivotal role in iron metabolism by regulating HAMP/hepcidin expression upon inflammation or bacterial infection. Through activation of IL6ST-YAP-NOTCH pathway, induces inflammation-induced epithelial regeneration. This Sus scrofa (Pig) protein is Interleukin-6 (IL6).